The primary structure comprises 428 residues: Elongation factor 1-alpha (428 aa).

The tr-type G domain maps to 5–225 (KPILNVAFIG…DGFQPPEKPT (221 aa)). Residues 14 to 21 (GHVDAGKS) are G1. 14–21 (GHVDAGKS) contacts GTP. A Mg(2+)-binding site is contributed by serine 21. The G2 stretch occupies residues 70–74 (GVTID). Residues 91 to 94 (DCPG) are G3. Residues 91 to 95 (DCPGH) and 149 to 152 (NKMD) each bind GTP. The G4 stretch occupies residues 149 to 152 (NKMD). The G5 stretch occupies residues 189–191 (ASL).

Belongs to the TRAFAC class translation factor GTPase superfamily. Classic translation factor GTPase family. EF-Tu/EF-1A subfamily.

The protein localises to the cytoplasm. It carries out the reaction GTP + H2O = GDP + phosphate + H(+). Its function is as follows. GTP hydrolase that promotes the GTP-dependent binding of aminoacyl-tRNA to the A-site of ribosomes during protein biosynthesis. The sequence is that of Elongation factor 1-alpha from Methanococcus vannielii (strain ATCC 35089 / DSM 1224 / JCM 13029 / OCM 148 / SB).